The following is a 360-amino-acid chain: Peptide chain release factor 1 (360 aa).

Glutamine 235 is subject to N5-methylglutamine.

The protein belongs to the prokaryotic/mitochondrial release factor family. Methylated by PrmC. Methylation increases the termination efficiency of RF1.

The protein resides in the cytoplasm. Functionally, peptide chain release factor 1 directs the termination of translation in response to the peptide chain termination codons UAG and UAA. This chain is Peptide chain release factor 1, found in Cupriavidus pinatubonensis (strain JMP 134 / LMG 1197) (Cupriavidus necator (strain JMP 134)).